The primary structure comprises 173 residues: Endoribonuclease YbeY (173 aa).

His126, His130, and His136 together coordinate Zn(2+).

It belongs to the endoribonuclease YbeY family. Zn(2+) serves as cofactor.

The protein localises to the cytoplasm. Functionally, single strand-specific metallo-endoribonuclease involved in late-stage 70S ribosome quality control and in maturation of the 3' terminus of the 16S rRNA. This is Endoribonuclease YbeY from Sinorhizobium fredii (strain NBRC 101917 / NGR234).